A 113-amino-acid chain; its full sequence is MQAKAVAKSVRIAPRKVRLVVDLIRGKEVGEAIAILNHTQRGASPVVEKVLKSAIANAEHNYEMDADSLVISEAFVNEGATLKRFRPRAQGRASRINKRTSHITVVVTEKKEG.

The protein belongs to the universal ribosomal protein uL22 family. In terms of assembly, part of the 50S ribosomal subunit.

Its function is as follows. This protein binds specifically to 23S rRNA; its binding is stimulated by other ribosomal proteins, e.g. L4, L17, and L20. It is important during the early stages of 50S assembly. It makes multiple contacts with different domains of the 23S rRNA in the assembled 50S subunit and ribosome. Functionally, the globular domain of the protein is located near the polypeptide exit tunnel on the outside of the subunit, while an extended beta-hairpin is found that lines the wall of the exit tunnel in the center of the 70S ribosome. The chain is Large ribosomal subunit protein uL22 from Oceanobacillus iheyensis (strain DSM 14371 / CIP 107618 / JCM 11309 / KCTC 3954 / HTE831).